The sequence spans 271 residues: Monalysin (271 aa).

Positions 1–33 are excised as a propeptide; the sequence is MTIKEELGQPQSHSIELDEVSKEAASTRAALTS. Residues 102–170 are pore-forming domain; that stretch reads IPQNVTTTLS…FTDTTEMKGP (69 aa).

Pro-Monalysin forms a stable donut-like 18-mer complex composed of two disk-shaped nonamers held together by N-terminal swapping of the pro-peptides. After proteolytic cleavage, the inactive 18-mer complex probably dissociates into two disk-shaped active nonamers in which the transmembrane segments are unmasked and ready to engage the conformational change leading to the pore formation into the target membrane. Multimerizes into circular-like structures and barrel-like aggregates. Requires N-terminal cleavage to become fully active. The metalloprotease AprA can induce the rapid cleavage of pro-Monalysin into its active form. Can also be processed by trypsin.

Its subcellular location is the secreted. It localises to the host cell membrane. Its function is as follows. Pore-forming toxin that contributes to the virulence of P.entomophila against Drosophila, playing an important role in host intestinal damage and lethality. Displays cytolytic and hemolytic activity. The protein is Monalysin of Pseudomonas entomophila (strain L48).